Here is a 127-residue protein sequence, read N- to C-terminus: MFKEFKEFAFKGNVLDLAIGVIIGAAFGKIVTALVDVVIMPIISIILSLILNDVNIATWQFSIGATPIMIGVLIKTIIEFLIIAFVLFLFVKGINSTRRKQEVEAPAAPPPSEEVLLLREIRDSLQK.

3 helical membrane-spanning segments follow: residues 8–28 (FAFK…AAFG), 30–50 (IVTA…LSLI), and 70–90 (IGVL…LFLF).

The protein belongs to the MscL family. In terms of assembly, homopentamer.

It localises to the cell membrane. Channel that opens in response to stretch forces in the membrane lipid bilayer. May participate in the regulation of osmotic pressure changes within the cell. The protein is Large-conductance mechanosensitive channel of Herpetosiphon aurantiacus (strain ATCC 23779 / DSM 785 / 114-95).